We begin with the raw amino-acid sequence, 449 residues long: CBL-interacting protein kinase 31 (449 aa).

The region spanning 20 to 275 (YELGRTIGEG…ISQILEDPWF (256 aa)) is the Protein kinase domain. Residues 26–34 (IGEGTFAKV) and lysine 49 contribute to the ATP site. Aspartate 143 serves as the catalytic Proton acceptor. Residues 161 to 190 (DFGLSALTEQVKADGLLHTTCGTPNYVAPE) are activation loop. Positions 313 to 337 (DQPTSMNAFELISLNQALNLDNLFE) constitute an NAF domain.

Belongs to the protein kinase superfamily. CAMK Ser/Thr protein kinase family. SNF1 subfamily. In terms of assembly, may interact with CBL3. The cofactor is Mn(2+). Autophosphorylated. In terms of tissue distribution, highly expressed in leaf blade and leaf sheath, but not in other tissues.

The enzyme catalyses L-seryl-[protein] + ATP = O-phospho-L-seryl-[protein] + ADP + H(+). It carries out the reaction L-threonyl-[protein] + ATP = O-phospho-L-threonyl-[protein] + ADP + H(+). Its function is as follows. Involved in cold stress tolerance. CIPK serine-threonine protein kinases interact with CBL proteins. Binding of a CBL protein to the regulatory NAF domain of CIPK protein lead to the activation of the kinase in a calcium-dependent manner. The chain is CBL-interacting protein kinase 31 (CIPK31) from Oryza sativa subsp. japonica (Rice).